The primary structure comprises 72 residues: Large ribosomal subunit protein bL31 (72 aa).

The Zn(2+) site is built by cysteine 16, cysteine 18, cysteine 38, and cysteine 41.

The protein belongs to the bacterial ribosomal protein bL31 family. Type A subfamily. Part of the 50S ribosomal subunit. Zn(2+) serves as cofactor.

In terms of biological role, binds the 23S rRNA. The chain is Large ribosomal subunit protein bL31 from Aliivibrio fischeri (strain ATCC 700601 / ES114) (Vibrio fischeri).